A 414-amino-acid polypeptide reads, in one-letter code: Na(+)-translocating NADH-quinone reductase subunit B (414 aa).

3 helical membrane passes run 56-76, 129-149, and 164-184; these read IMIMVWFAVFPAMFWGMYNAG, FLPIYATVFLVGGFWEVLFCM, and ILFALIVPPTLPLWQAALGIT. FMN phosphoryl threonine is present on Thr-236. A run of 5 helical transmembrane segments spans residues 268–288, 297–317, 325–345, 358–378, and 381–401; these read IPGSIGEVSTLALMIGAAMIV, IIAGVMIGMIAVSTLFNVIGS, MPWHWHLVLGGFAFGMFFMAT, WWYGILIGAMCVMIRVVNPAY, and GMMLAILFANLFAPLFDHVVI.

This sequence belongs to the NqrB/RnfD family. As to quaternary structure, composed of six subunits; NqrA, NqrB, NqrC, NqrD, NqrE and NqrF. FMN is required as a cofactor.

It localises to the cell inner membrane. The catalysed reaction is a ubiquinone + n Na(+)(in) + NADH + H(+) = a ubiquinol + n Na(+)(out) + NAD(+). Its activity is regulated as follows. This reaction is tightly coupled to the Na(+) pumping activity and specifically requires Na(+) for activity. Inhibited by korormicin and 2-N-heptyl-4-hydroxyquinoline N-oxide (HQNO). Functionally, NQR complex catalyzes the reduction of ubiquinone-1 to ubiquinol by two successive reactions, coupled with the transport of Na(+) ions from the cytoplasm to the periplasm. NqrA to NqrE are probably involved in the second step, the conversion of ubisemiquinone to ubiquinol. This is Na(+)-translocating NADH-quinone reductase subunit B from Vibrio alginolyticus.